We begin with the raw amino-acid sequence, 207 residues long: Thiamine-phosphate synthase (207 aa).

4-amino-2-methyl-5-(diphosphooxymethyl)pyrimidine is bound by residues 38–42 (QYRNK) and asparagine 70. Mg(2+) is bound by residues aspartate 71 and aspartate 90. 4-amino-2-methyl-5-(diphosphooxymethyl)pyrimidine is bound at residue serine 109. 136 to 138 (TAT) is a 2-[(2R,5Z)-2-carboxy-4-methylthiazol-5(2H)-ylidene]ethyl phosphate binding site. Lysine 139 contacts 4-amino-2-methyl-5-(diphosphooxymethyl)pyrimidine. 2-[(2R,5Z)-2-carboxy-4-methylthiazol-5(2H)-ylidene]ethyl phosphate contacts are provided by residues glycine 165 and 185–186 (VS).

The protein belongs to the thiamine-phosphate synthase family. The cofactor is Mg(2+).

The enzyme catalyses 2-[(2R,5Z)-2-carboxy-4-methylthiazol-5(2H)-ylidene]ethyl phosphate + 4-amino-2-methyl-5-(diphosphooxymethyl)pyrimidine + 2 H(+) = thiamine phosphate + CO2 + diphosphate. It catalyses the reaction 2-(2-carboxy-4-methylthiazol-5-yl)ethyl phosphate + 4-amino-2-methyl-5-(diphosphooxymethyl)pyrimidine + 2 H(+) = thiamine phosphate + CO2 + diphosphate. It carries out the reaction 4-methyl-5-(2-phosphooxyethyl)-thiazole + 4-amino-2-methyl-5-(diphosphooxymethyl)pyrimidine + H(+) = thiamine phosphate + diphosphate. It participates in cofactor biosynthesis; thiamine diphosphate biosynthesis; thiamine phosphate from 4-amino-2-methyl-5-diphosphomethylpyrimidine and 4-methyl-5-(2-phosphoethyl)-thiazole: step 1/1. Its function is as follows. Condenses 4-methyl-5-(beta-hydroxyethyl)thiazole monophosphate (THZ-P) and 2-methyl-4-amino-5-hydroxymethyl pyrimidine pyrophosphate (HMP-PP) to form thiamine monophosphate (TMP). The chain is Thiamine-phosphate synthase from Xanthomonas campestris pv. campestris (strain 8004).